We begin with the raw amino-acid sequence, 238 residues long: Sugar fermentation stimulation protein homolog (238 aa).

Belongs to the SfsA family.

The protein is Sugar fermentation stimulation protein homolog of Alkalilimnicola ehrlichii (strain ATCC BAA-1101 / DSM 17681 / MLHE-1).